We begin with the raw amino-acid sequence, 170 residues long: Calcineurin subunit B type 2 (170 aa).

Residue Gly2 is the site of N-myristoyl glycine attachment. EF-hand domains lie at 18-46 (DEIK…FTSM), 50-85 (QENP…FSVR), 87-122 (DEEQ…MVGD), and 128-163 (QLQQ…LEIH). Residues Asp63, Asp65, Asp67, Gln69, Glu74, Asp100, Asp102, Asp104, Tyr106, and Glu111 each coordinate Ca(2+). The calcineurin A binding stretch occupies residues 131 to 136 (QLVDKT). Ca(2+) is bound by residues Asp141, Asp143, Asp145, Lys147, and Glu152.

Belongs to the calcineurin regulatory subunit family. In terms of assembly, forms a complex composed of a calmodulin-dependent catalytic subunit (also known as calcineurin A) and a regulatory Ca(2+)-binding subunit (also known as calcineurin B). There are three catalytic subunits, each encoded by a separate gene (PPP3CA, PPP3CB, and PPP3CC) and two regulatory subunits which are also encoded by separate genes (PPP3R1 and PPP3R2). Interacts with SPATA33 (via PQIIIT motif).

The protein localises to the mitochondrion. Regulatory subunit of calcineurin, a calcium-dependent, calmodulin stimulated protein phosphatase. Confers calcium sensitivity. The sequence is that of Calcineurin subunit B type 2 (PPP3R2) from Bos taurus (Bovine).